Here is a 120-residue protein sequence, read N- to C-terminus: FK506-binding protein 1A (120 aa).

One can recognise a PPIase FKBP-type domain in the interval 26-114; the sequence is GDNVDVHYKG…IFETELVGIK (89 aa).

Belongs to the FKBP-type PPIase family. FKBP1 subfamily.

The protein resides in the cytoplasm. It carries out the reaction [protein]-peptidylproline (omega=180) = [protein]-peptidylproline (omega=0). PPIases accelerate the folding of proteins. It catalyzes the cis-trans isomerization of proline imidic peptide bonds in oligopeptides. In Neurospora crassa (strain ATCC 24698 / 74-OR23-1A / CBS 708.71 / DSM 1257 / FGSC 987), this protein is FK506-binding protein 1A (fkr-2).